Here is a 524-residue protein sequence, read N- to C-terminus: 2-isopropylmalate synthase (524 aa).

The 263-residue stretch at 5-267 (VIIFDTTLRD…HTNINHQEIF (263 aa)) folds into the Pyruvate carboxyltransferase domain. The Mn(2+) site is built by Asp14, His202, His204, and Asn238. The tract at residues 392–524 (SLDYFSVQSG…SKHQNNQETV (133 aa)) is regulatory domain.

Belongs to the alpha-IPM synthase/homocitrate synthase family. LeuA type 1 subfamily. In terms of assembly, homodimer. The cofactor is Mn(2+).

The protein resides in the cytoplasm. The enzyme catalyses 3-methyl-2-oxobutanoate + acetyl-CoA + H2O = (2S)-2-isopropylmalate + CoA + H(+). Its pathway is amino-acid biosynthesis; L-leucine biosynthesis; L-leucine from 3-methyl-2-oxobutanoate: step 1/4. Catalyzes the condensation of the acetyl group of acetyl-CoA with 3-methyl-2-oxobutanoate (2-ketoisovalerate) to form 3-carboxy-3-hydroxy-4-methylpentanoate (2-isopropylmalate). The protein is 2-isopropylmalate synthase of Serratia proteamaculans (strain 568).